Consider the following 320-residue polypeptide: MRILRIYLDGAYDTGKSTTARVMALGGALYVPEPMAYWRTLFDTDTVAGIYDAQTRKQNGSLSEEDAALVTAHDQAAFATPYLLLHTRLVPLFGPAVEGPPEMTVVFDRHPVAATVCFPLARFIVGDISAAAFVGLAATLPGEPPGGNLVVASLDPDEHLRRLRARARAGEHVDARLLTALRNVYAMLVNTSRYLSSGRRWRDDWGRAPRFDQTTRDCLALNELCRPRDDPELQDTLFGAYKAPELCDRRGRPLEVHAWAMDALVAKLLPLRVSTVDLGPSPRVCAAAVAAQTRGMEVTESAYGDHIRQCVCAFTSEMGV.

Residue G10–S17 participates in ATP binding. E33 acts as the Proton acceptor in catalysis. 2 residues coordinate substrate: Y51 and Q75. An ATP-binding site is contributed by R162. R168 provides a ligand contact to substrate.

The protein belongs to the herpesviridae thymidine kinase family. Homodimer.

It catalyses the reaction thymidine + ATP = dTMP + ADP + H(+). Functionally, catalyzes the transfer of the gamma-phospho group of ATP to thymidine to generate dTMP in the salvage pathway of pyrimidine synthesis. The dTMP serves as a substrate for DNA polymerase during viral DNA replication. Allows the virus to be reactivated and to grow in non-proliferative cells lacking a high concentration of phosphorylated nucleic acid precursors. The sequence is that of Thymidine kinase from Suid herpesvirus 1 (strain NIA-3) (SuHV-1).